Reading from the N-terminus, the 216-residue chain is Orotidine 5'-phosphate decarboxylase (216 aa).

Substrate contacts are provided by residues aspartate 12, lysine 34, 62-71 (DFKVADIDAT), serine 119, 172-182 (PGVGFQGGNAK), glycine 194, and arginine 195. The Proton donor role is filled by lysine 64.

The protein belongs to the OMP decarboxylase family. Type 1 subfamily. Homodimer.

It carries out the reaction orotidine 5'-phosphate + H(+) = UMP + CO2. The protein operates within pyrimidine metabolism; UMP biosynthesis via de novo pathway; UMP from orotate: step 2/2. In terms of biological role, catalyzes the decarboxylation of orotidine 5'-monophosphate (OMP) to uridine 5'-monophosphate (UMP). This Methanosphaera stadtmanae (strain ATCC 43021 / DSM 3091 / JCM 11832 / MCB-3) protein is Orotidine 5'-phosphate decarboxylase.